The chain runs to 151 residues: Ribosomal RNA large subunit methyltransferase H (151 aa).

S-adenosyl-L-methionine-binding positions include Leu-70, Gly-99, and 118–123 (LSKLTF).

This sequence belongs to the RNA methyltransferase RlmH family. As to quaternary structure, homodimer.

It is found in the cytoplasm. The catalysed reaction is pseudouridine(1915) in 23S rRNA + S-adenosyl-L-methionine = N(3)-methylpseudouridine(1915) in 23S rRNA + S-adenosyl-L-homocysteine + H(+). Specifically methylates the pseudouridine at position 1915 (m3Psi1915) in 23S rRNA. The chain is Ribosomal RNA large subunit methyltransferase H from Gloeobacter violaceus (strain ATCC 29082 / PCC 7421).